A 494-amino-acid polypeptide reads, in one-letter code: MFS-type transporter lnaF (494 aa).

The segment at 1-51 is disordered; sequence MTYDPENAMGEARADAPVEAEKEHEATQTTVKESTLGYDNSSDPSRRDSYR. A compositionally biased stretch (basic and acidic residues) spans 12 to 26; that stretch reads ARADAPVEAEKEHEA. N40, N58, and N68 each carry an N-linked (GlcNAc...) asparagine glycan. The next 10 helical transmembrane spans lie at 105-125, 128-148, 156-176, 203-223, 228-248, 290-310, 323-343, 354-374, 383-403, and 446-466; these read SLLIGAILGVLALGYTSDMFS, AGLLFTSGLVAIGTLMSTLAL, MLWYFVIVRGIAGFGVGGEYP, TLMATSAAPIQMIVYLICLIA, LPVTFHAIYSIATILPVIIMV, LAFFLYDFINFPNSIMSSTII, AIWQVILGALPVPGVIVGAWL, ILGFAGYMVLGFVIGGTFPHL, VLYGLLQALGHMGPGATIGLI, and STFYLAGGIAILGMIVYWFLP.

Belongs to the major facilitator superfamily. Sugar transporter (TC 2.A.1.1) family.

It localises to the cell membrane. Its function is as follows. MFS-type transporter; part of the lna gene cluster that mediates the biosynthesis of diastereomeric piperazines. Lna and lnb clusters encode sets of enzymes that produce overlapping sets of previously undescribed metabolites such as piperazinomycin-like metabolites or morpholine. The lna and lnb biosynthetic pathways appear to be part of a signaling network that controls the formation of sclerotia, a resilient overwintering structure. May be involved in the secretion of the metabolites produced by the lna and lnb clusters. This is MFS-type transporter lnaF from Aspergillus flavus (strain ATCC 200026 / FGSC A1120 / IAM 13836 / NRRL 3357 / JCM 12722 / SRRC 167).